The primary structure comprises 376 residues: Heme chaperone HemW (376 aa).

The Radical SAM core domain occupies 1-236 (MFKLPPISLY…LKQSGYKKYE (236 aa)). Residue Tyr10 participates in S-adenosyl-L-methionine binding. 3 residues coordinate [4Fe-4S] cluster: Cys16, Cys20, and Cys23. Residues Gly66, 67–68 (GT), Glu99, Gln126, Arg138, and Asp162 contribute to the S-adenosyl-L-methionine site.

This sequence belongs to the anaerobic coproporphyrinogen-III oxidase family. HemW subfamily. The cofactor is [4Fe-4S] cluster.

The protein resides in the cytoplasm. In terms of biological role, probably acts as a heme chaperone, transferring heme to an unknown acceptor. Binds one molecule of heme per monomer, possibly covalently. Binds 1 [4Fe-4S] cluster. The cluster is coordinated with 3 cysteines and an exchangeable S-adenosyl-L-methionine. This Buchnera aphidicola subsp. Schizaphis graminum (strain Sg) protein is Heme chaperone HemW.